The sequence spans 549 residues: Glucose-6-phosphate isomerase (549 aa).

Residue E355 is the Proton donor of the active site. Residues H386 and K514 contribute to the active site.

Belongs to the GPI family.

The protein resides in the cytoplasm. The catalysed reaction is alpha-D-glucose 6-phosphate = beta-D-fructose 6-phosphate. It participates in carbohydrate biosynthesis; gluconeogenesis. Its pathway is carbohydrate degradation; glycolysis; D-glyceraldehyde 3-phosphate and glycerone phosphate from D-glucose: step 2/4. In terms of biological role, catalyzes the reversible isomerization of glucose-6-phosphate to fructose-6-phosphate. This Salmonella schwarzengrund (strain CVM19633) protein is Glucose-6-phosphate isomerase.